Reading from the N-terminus, the 447-residue chain is Multidrug efflux pump SdrM (447 aa).

Helical transmembrane passes span 6-26 (IITV…SSII), 42-62 (LISL…PIVG), 70-90 (IIYV…MCGL), 94-114 (FTML…LMSL), 134-154 (IVGS…GGIL), 161-181 (WLFY…IWTF), 194-214 (FDTK…FALL), 217-237 (QLLL…MCLF), 260-280 (VFIT…YIPV), 286-306 (LGLS…AWIT), 323-342 (IYLL…SFGI), 346-363 (VLIA…GYIY), 392-412 (LGAS…SGIF), and 418-438 (NVLS…VVFF).

The protein belongs to the major facilitator superfamily.

The protein localises to the cell membrane. Its function is as follows. Energy-dependent drug efflux pump that increases resistance to antimicrobial agents such as norfloxacin, acriflavine and ethidium bromide. In Staphylococcus aureus (strain N315), this protein is Multidrug efflux pump SdrM.